A 264-amino-acid chain; its full sequence is Thymidylate synthase (264 aa).

R21 provides a ligand contact to dUMP. A (6R)-5,10-methylene-5,6,7,8-tetrahydrofolate-binding site is contributed by H51. 126–127 (RR) provides a ligand contact to dUMP. The active-site Nucleophile is the C146. DUMP is bound by residues 166-169 (RSAD), N177, and 207-209 (HLY). D169 serves as a coordination point for (6R)-5,10-methylene-5,6,7,8-tetrahydrofolate. A263 is a binding site for (6R)-5,10-methylene-5,6,7,8-tetrahydrofolate.

It belongs to the thymidylate synthase family. Bacterial-type ThyA subfamily. As to quaternary structure, homodimer.

It is found in the cytoplasm. The catalysed reaction is dUMP + (6R)-5,10-methylene-5,6,7,8-tetrahydrofolate = 7,8-dihydrofolate + dTMP. The protein operates within pyrimidine metabolism; dTTP biosynthesis. Functionally, catalyzes the reductive methylation of 2'-deoxyuridine-5'-monophosphate (dUMP) to 2'-deoxythymidine-5'-monophosphate (dTMP) while utilizing 5,10-methylenetetrahydrofolate (mTHF) as the methyl donor and reductant in the reaction, yielding dihydrofolate (DHF) as a by-product. This enzymatic reaction provides an intracellular de novo source of dTMP, an essential precursor for DNA biosynthesis. In Azoarcus sp. (strain BH72), this protein is Thymidylate synthase.